The primary structure comprises 372 residues: Aminodeoxyfutalosine synthase (372 aa).

The region spanning 53-292 is the Radical SAM core domain; the sequence is HKTYFVHSIR…VARLYLDNFP (240 aa). The [4Fe-4S] cluster site is built by C69, C73, and C76.

It belongs to the radical SAM superfamily. MqnE family. [4Fe-4S] cluster is required as a cofactor.

The enzyme catalyses 3-[(1-carboxyvinyl)-oxy]benzoate + S-adenosyl-L-methionine + H2O = 6-amino-6-deoxyfutalosine + hydrogencarbonate + L-methionine + H(+). Its pathway is quinol/quinone metabolism; menaquinone biosynthesis. Its function is as follows. Radical SAM enzyme that catalyzes the addition of the adenosyl radical to the double bond of 3-[(1-carboxyvinyl)oxy]benzoate, leading to aminodeoxyfutalosine (AFL), a key intermediate in the formation of menaquinone (MK, vitamin K2) from chorismate. In Thermus thermophilus (strain ATCC 27634 / DSM 579 / HB8), this protein is Aminodeoxyfutalosine synthase.